Reading from the N-terminus, the 1270-residue chain is DNA-directed RNA polymerase subunit beta (1270 aa).

This sequence belongs to the RNA polymerase beta chain family. In terms of assembly, the RNAP catalytic core consists of 2 alpha, 1 beta, 1 beta' and 1 omega subunit. When a sigma factor is associated with the core the holoenzyme is formed, which can initiate transcription.

The enzyme catalyses RNA(n) + a ribonucleoside 5'-triphosphate = RNA(n+1) + diphosphate. Its function is as follows. DNA-dependent RNA polymerase catalyzes the transcription of DNA into RNA using the four ribonucleoside triphosphates as substrates. This is DNA-directed RNA polymerase subunit beta from Christiangramia forsetii (strain DSM 17595 / CGMCC 1.15422 / KT0803) (Gramella forsetii).